Reading from the N-terminus, the 259-residue chain is 3-deoxy-manno-octulosonate cytidylyltransferase (259 aa).

This sequence belongs to the KdsB family.

It is found in the cytoplasm. It catalyses the reaction 3-deoxy-alpha-D-manno-oct-2-ulosonate + CTP = CMP-3-deoxy-beta-D-manno-octulosonate + diphosphate. It functions in the pathway nucleotide-sugar biosynthesis; CMP-3-deoxy-D-manno-octulosonate biosynthesis; CMP-3-deoxy-D-manno-octulosonate from 3-deoxy-D-manno-octulosonate and CTP: step 1/1. The protein operates within bacterial outer membrane biogenesis; lipopolysaccharide biosynthesis. Functionally, activates KDO (a required 8-carbon sugar) for incorporation into bacterial lipopolysaccharide in Gram-negative bacteria. This chain is 3-deoxy-manno-octulosonate cytidylyltransferase, found in Protochlamydia amoebophila (strain UWE25).